The chain runs to 211 residues: MDAPGALAQTAAPGPGRKELKIVIVGDGGCGKTSLLMVYSQGSFPEHYAPSVFEKYTASVTVGSKEVTLNLYDTAGQEDYDRLRPLSYQNTHLVLICYDVMNPTSYDNVLIKWFPEVTHFCRGIPMVLIGCKTDLRKDKEQLRKLRAAQLEPITYMQGLSACEQIRAALYLECSAKFRENVEDVFREAAKVALSALKKAQRQKKRRLCLLL.

Met1 is subject to N-acetylmethionine. 26 to 33 (GDGGCGKT) contributes to the GTP binding site. The short motif at 48 to 56 (YAPSVFEKY) is the Effector region element. Residues 73-77 (DTAGQ) and 131-134 (CKTD) contribute to the GTP site. Position 208 is a cysteine methyl ester (Cys208). Residue Cys208 is the site of S-geranylgeranyl cysteine attachment. Positions 209–211 (LLL) are cleaved as a propeptide — removed in mature form.

Belongs to the small GTPase superfamily. Rho family.

The protein localises to the cell membrane. The protein resides in the cytoplasm. Its subcellular location is the cytoskeleton. In terms of biological role, plasma membrane-associated small GTPase which cycles between an active GTP-bound and an inactive GDP-bound state. Causes the formation of thin, actin-rich surface projections called filopodia. Functions cooperatively with CDC42 and Rac to generate additional structures, increasing the diversity of actin-based morphology. This is Rho-related GTP-binding protein RhoF (RHOF) from Homo sapiens (Human).